A 1320-amino-acid chain; its full sequence is Centrosomin (1320 aa).

A disordered region spans residues 20–41; the sequence is ASFDVPRPPGGGNSPLPSQGRS. A coiled-coil region spans residues 97–516; sequence RKTVDVKMEL…SSQEKEIKKL (420 aa). Positions 517–530 are enriched in basic and acidic residues; the sequence is NQENEQSANKENDC. A disordered region spans residues 517–554; that stretch reads NQENEQSANKENDCAKTVISPSSSGRSMSDNEASSQEM. Polar residues predominate over residues 535–554; that stretch reads ISPSSSGRSMSDNEASSQEM. Ser545 bears the Phosphoserine mark. Coiled-coil stretches lie at residues 626 to 654 and 712 to 983; these read EADLQQSFTEAEYMRALERNKLLQRKVDV and NSLL…LKLA. The short motif at 644 to 656 is the Nuclear localization signal element; that stretch reads RNKLLQRKVDVLF. Phosphothreonine is present on Thr782. At Ser785 the chain carries Phosphoserine. The segment covering 810 to 823 has biased composition (basic and acidic residues); the sequence is KKELEKRRSSEGQR. Disordered stretches follow at residues 810–849 and 863–893; these read KKELEKRRSSEGQRKERRSLPLPSQQFDNQSESEAWSEPD and SNSLAAPEQAISESESEGRTCATRQDRNRNS. Polar residues predominate over residues 831–843; sequence LPSQQFDNQSESE. Phosphoserine is present on residues Ser874, Ser876, Ser878, Ser1191, Ser1234, Ser1237, and Ser1239. The interval 1220–1249 is disordered; it reads VEMKTEGSASPKAKSEESTSPDSKSNVATG. Residues 1237-1247 are compositionally biased toward polar residues; that stretch reads STSPDSKSNVA.

In terms of assembly, monomer. In terms of tissue distribution, developing visceral mesoderm of the midgut, the central and peripheral nervous system, and developing gonads. Isoform J: Expressed in ovaries, testis and embryos. Isoform A: Expressed in testis only.

It localises to the cytoplasm. Its subcellular location is the cytoskeleton. It is found in the microtubule organizing center. The protein localises to the centrosome. The protein resides in the flagellum basal body. It localises to the perinuclear region. Its function is as follows. Core component of the centrosome throughout spermatogenesis. May participate in mitotic spindle assembly and the mechanics of morphogenesis through an interaction with microtubules, either directly or indirectly. Is a target of several homeotic genes. In Drosophila melanogaster (Fruit fly), this protein is Centrosomin (cnn).